A 115-amino-acid polypeptide reads, in one-letter code: uncharacterized protein (115 aa).

This is an uncharacterized protein from Homo sapiens (Human).